Consider the following 248-residue polypeptide: Uridylate kinase (248 aa).

13 to 16 (KLSG) lines the ATP pocket. Gly-55 serves as a coordination point for UMP. Positions 56 and 60 each coordinate ATP. Residues Asp-75 and 136–143 (TGNPYFTT) contribute to the UMP site. Positions 163, 169, and 172 each coordinate ATP.

The protein belongs to the UMP kinase family. In terms of assembly, homohexamer.

It is found in the cytoplasm. It carries out the reaction UMP + ATP = UDP + ADP. Its pathway is pyrimidine metabolism; CTP biosynthesis via de novo pathway; UDP from UMP (UMPK route): step 1/1. Its activity is regulated as follows. Inhibited by UTP. Catalyzes the reversible phosphorylation of UMP to UDP. In Leptospira interrogans serogroup Icterohaemorrhagiae serovar copenhageni (strain Fiocruz L1-130), this protein is Uridylate kinase.